A 215-amino-acid polypeptide reads, in one-letter code: Nascent polypeptide-associated complex subunit alpha (215 aa).

The segment at Met-1–Ser-81 is disordered. Over residues Val-9–Val-21 the composition is skewed to polar residues. A compositionally biased stretch (acidic residues) spans Ser-29 to Asp-42. A compositionally biased stretch (low complexity) spans Ser-43–Ala-57. The NAC-A/B domain occupies Ser-70–Ala-135. Residues Val-176 to Leu-213 enclose the UBA domain.

This sequence belongs to the NAC-alpha family.

Functionally, may promote appropriate targeting of ribosome-nascent polypeptide complexes. This is Nascent polypeptide-associated complex subunit alpha (naca) from Oreochromis niloticus (Nile tilapia).